The chain runs to 256 residues: Protein N-terminal and lysine N-methyltransferase EFM7 (256 aa).

The interval 1 to 26 (MSDTESLNDALGLFDEPEDFRPEKPK) is disordered. S-adenosyl-L-methionine-binding positions include W64, 90–92 (GAA), D112, W145, and S168.

The protein belongs to the class I-like SAM-binding methyltransferase superfamily. EFM7 family.

It is found in the cytoplasm. Functionally, S-adenosyl-L-methionine-dependent protein methyltransferase that trimethylates the N-terminal glycine 'Gly-2' of elongation factor 1-alpha, before also catalyzing the mono- and dimethylation of 'Lys-3'. The polypeptide is Protein N-terminal and lysine N-methyltransferase EFM7 (Candida glabrata (strain ATCC 2001 / BCRC 20586 / JCM 3761 / NBRC 0622 / NRRL Y-65 / CBS 138) (Yeast)).